The sequence spans 669 residues: RNA-binding protein 14 (669 aa).

RRM domains follow at residues 1–73 (MKIF…MSRP) and 79–149 (WKIF…LSTK). Glycyl lysine isopeptide (Lys-Gly) (interchain with G-Cter in SUMO2) cross-links involve residues K126, K135, K138, K149, and K153. Disordered stretches follow at residues 148 to 175 (TKGQKKGPGLAIQSGDKTKKPGAGDTAF) and 193 to 232 (NSTGGFDGQARQPTPPFFGRDRSPLRRSPPRASYVAPLTA). At S161 the chain carries Phosphoserine. N6-acetyllysine; alternate is present on K164. A Glycyl lysine isopeptide (Lys-Gly) (interchain with G-Cter in SUMO2); alternate cross-link involves residue K164. At T206 the chain carries Phosphothreonine. Residues S220, S242, S244, S256, S272, and S280 each carry the phosphoserine modification. Positions 284 to 303 (PYRGQLASPSSQSAAASSLG) are disordered. The segment covering 287–303 (GQLASPSSQSAAASSLG) has biased composition (low complexity). Residues 307–354 (GAQPSASALSSYGGQPAAASSLNSYGAQGSSLASYGNQPSSYGAQAAS) form a TRBP-interacting domain; interaction with STIL region. S520, S523, S527, and S562 each carry phosphoserine. A disordered region spans residues 569–590 (ANSTPPPYERTRLSPPRASYDD). The residue at position 572 (T572) is a Phosphothreonine. S582 carries the phosphoserine modification. Residue K600 forms a Glycyl lysine isopeptide (Lys-Gly) (interchain with G-Cter in SUMO2) linkage. A phosphoserine mark is found at S618, S620, S623, S627, S643, and S649.

Interacts with NCOA6, CITED1 and XRCC5/KU86. Interacts with SS18. Interacts with STIL and interferes with its interaction with CPAP. Interacts with gamma-tubulin. Part of the HDP-RNP complex composed of at least HEXIM1, PRKDC, XRCC5, XRCC6, paraspeckle proteins (SFPQ, NONO, PSPC1, RBM14, and MATR3) and NEAT1 RNA.

The protein localises to the nucleus. Its subcellular location is the nucleolus. It localises to the cytoplasm. In terms of biological role, may function as a nuclear receptor coactivator, enhancing transcription through other coactivators such as NCOA6 and CITED1. Regulates centriole biogenesis by suppressing the formation of aberrant centriolar protein complexes in the cytoplasm and thus preserving mitotic spindle integrity. Prevents the formation of the STIL-CPAP complex (which can induce the formation of aberrant centriolar protein complexes) by interfering with the interaction of STIL with CPAP. Plays a role in the regulation of DNA virus-mediated innate immune response by assembling into the HDP-RNP complex, a complex that serves as a platform for IRF3 phosphorylation and subsequent innate immune response activation through the cGAS-STING pathway. This is RNA-binding protein 14 (RBM14) from Bos taurus (Bovine).